The primary structure comprises 91 residues: Protein translocase subunit SecG (91 aa).

The next 2 membrane-spanning stretches (helical) occupy residues 16-36 (HTFLIVLLIIDCIALITVVLL) and 71-91 (LTIILSILFFVLMICISYLGM).

The protein belongs to the SecG family. Component of the Sec protein translocase complex. Heterotrimer consisting of SecY, SecE and SecG subunits. The heterotrimers can form oligomers, although 1 heterotrimer is thought to be able to translocate proteins. Interacts with SecDF, and other proteins may be involved. The channel interacts with SecA via subunit SecY. Also part of the accessory SecA2/SecY2 protein translocation apparatus required to export cell wall protein GspB.

The protein localises to the cell membrane. Subunit of the protein translocation channel SecYEG. While not essential, it considerably increases the export efficiency of extracellular proteins. This Staphylococcus aureus (strain NCTC 8325 / PS 47) protein is Protein translocase subunit SecG.